We begin with the raw amino-acid sequence, 62 residues long: Large ribosomal subunit protein bL28 (62 aa).

The protein belongs to the bacterial ribosomal protein bL28 family.

This is Large ribosomal subunit protein bL28 from Helicobacter pylori (strain Shi470).